The primary structure comprises 81 residues: Costars family protein ABRACL (81 aa).

The protein belongs to the costars family.

This Xenopus tropicalis (Western clawed frog) protein is Costars family protein ABRACL (abracl).